A 413-amino-acid polypeptide reads, in one-letter code: Phosphopentomutase (413 aa).

Residues Asp-11, Asp-306, His-311, Asp-347, His-348, and His-359 each coordinate Mn(2+).

It belongs to the phosphopentomutase family. Mn(2+) is required as a cofactor.

The protein resides in the cytoplasm. The catalysed reaction is 2-deoxy-alpha-D-ribose 1-phosphate = 2-deoxy-D-ribose 5-phosphate. The enzyme catalyses alpha-D-ribose 1-phosphate = D-ribose 5-phosphate. It participates in carbohydrate degradation; 2-deoxy-D-ribose 1-phosphate degradation; D-glyceraldehyde 3-phosphate and acetaldehyde from 2-deoxy-alpha-D-ribose 1-phosphate: step 1/2. Functionally, isomerase that catalyzes the conversion of deoxy-ribose 1-phosphate (dRib-1-P) and ribose 1-phosphate (Rib-1-P) to deoxy-ribose 5-phosphate (dRib-5-P) and ribose 5-phosphate (Rib-5-P), respectively. This chain is Phosphopentomutase, found in Helicobacter pylori (strain HPAG1).